We begin with the raw amino-acid sequence, 370 residues long: Homospermidine synthase (370 aa).

This sequence belongs to the deoxyhypusine synthase family. Homotetramer. It depends on NAD(+) as a cofactor.

The enzyme catalyses putrescine + spermidine = sym-homospermidine + propane-1,3-diamine. Its pathway is alkaloid biosynthesis; pyrrolizidine alkaloid biosynthesis. In terms of biological role, catalyzes the transfer of an aminobutyl unit from spermidine onto putrescine. The resulting polyamine homospermidine is a precursor in the biosynthesis of pyrrolizidine alkaloids. The polypeptide is Homospermidine synthase (HSS1) (Senecio vulgaris (Common groundsel)).